The sequence spans 352 residues: Biotin synthase (352 aa).

The Radical SAM core domain occupies 44 to 262 (NRVQVSTLLS…LAVARILMPQ (219 aa)). Residues Cys-59, Cys-63, and Cys-66 each contribute to the [4Fe-4S] cluster site. Residues Cys-103, Cys-134, Cys-194, and Arg-266 each contribute to the [2Fe-2S] cluster site.

This sequence belongs to the radical SAM superfamily. Biotin synthase family. As to quaternary structure, homodimer. Requires [4Fe-4S] cluster as cofactor. [2Fe-2S] cluster serves as cofactor.

The catalysed reaction is (4R,5S)-dethiobiotin + (sulfur carrier)-SH + 2 reduced [2Fe-2S]-[ferredoxin] + 2 S-adenosyl-L-methionine = (sulfur carrier)-H + biotin + 2 5'-deoxyadenosine + 2 L-methionine + 2 oxidized [2Fe-2S]-[ferredoxin]. It functions in the pathway cofactor biosynthesis; biotin biosynthesis; biotin from 7,8-diaminononanoate: step 2/2. Its function is as follows. Catalyzes the conversion of dethiobiotin (DTB) to biotin by the insertion of a sulfur atom into dethiobiotin via a radical-based mechanism. This is Biotin synthase from Pseudomonas savastanoi pv. phaseolicola (strain 1448A / Race 6) (Pseudomonas syringae pv. phaseolicola (strain 1448A / Race 6)).